A 91-amino-acid polypeptide reads, in one-letter code: Large ribosomal subunit protein eL31 (91 aa).

This sequence belongs to the eukaryotic ribosomal protein eL31 family.

This chain is Large ribosomal subunit protein eL31, found in Pyrobaculum calidifontis (strain DSM 21063 / JCM 11548 / VA1).